Consider the following 473-residue polypeptide: Adenosylhomocysteinase (473 aa).

Residues Thr64, Asp139, and Glu199 each contribute to the substrate site. 200–202 (TTT) contacts NAD(+). Substrate contacts are provided by Lys229 and Asp233. Residues Asn234, 263–268 (GYGDVG), Glu286, Asn321, 342–344 (IGH), and Asn387 each bind NAD(+).

This sequence belongs to the adenosylhomocysteinase family. The cofactor is NAD(+).

It is found in the cytoplasm. It carries out the reaction S-adenosyl-L-homocysteine + H2O = L-homocysteine + adenosine. Its pathway is amino-acid biosynthesis; L-homocysteine biosynthesis; L-homocysteine from S-adenosyl-L-homocysteine: step 1/1. Functionally, may play a key role in the regulation of the intracellular concentration of adenosylhomocysteine. The chain is Adenosylhomocysteinase from Paraburkholderia phytofirmans (strain DSM 17436 / LMG 22146 / PsJN) (Burkholderia phytofirmans).